The sequence spans 430 residues: tRNA(Ile)-lysidine synthase (430 aa).

21-26 (SGGLDS) provides a ligand contact to ATP.

This sequence belongs to the tRNA(Ile)-lysidine synthase family.

It localises to the cytoplasm. The catalysed reaction is cytidine(34) in tRNA(Ile2) + L-lysine + ATP = lysidine(34) in tRNA(Ile2) + AMP + diphosphate + H(+). Ligates lysine onto the cytidine present at position 34 of the AUA codon-specific tRNA(Ile) that contains the anticodon CAU, in an ATP-dependent manner. Cytidine is converted to lysidine, thus changing the amino acid specificity of the tRNA from methionine to isoleucine. The polypeptide is tRNA(Ile)-lysidine synthase (Salmonella newport (strain SL254)).